A 179-amino-acid polypeptide reads, in one-letter code: Large ribosomal subunit protein uL6 (179 aa).

This sequence belongs to the universal ribosomal protein uL6 family. As to quaternary structure, part of the 50S ribosomal subunit.

This protein binds to the 23S rRNA, and is important in its secondary structure. It is located near the subunit interface in the base of the L7/L12 stalk, and near the tRNA binding site of the peptidyltransferase center. The sequence is that of Large ribosomal subunit protein uL6 from Trichodesmium erythraeum (strain IMS101).